Reading from the N-terminus, the 334-residue chain is Biotin synthase (334 aa).

The 228-residue stretch at 48-275 (NQVQTSQLLS…RSMVRLSAGR (228 aa)) folds into the Radical SAM core domain. [4Fe-4S] cluster is bound by residues cysteine 63, cysteine 67, and cysteine 70. Positions 107, 138, 198, and 270 each coordinate [2Fe-2S] cluster.

The protein belongs to the radical SAM superfamily. Biotin synthase family. Homodimer. [4Fe-4S] cluster is required as a cofactor. [2Fe-2S] cluster serves as cofactor.

It catalyses the reaction (4R,5S)-dethiobiotin + (sulfur carrier)-SH + 2 reduced [2Fe-2S]-[ferredoxin] + 2 S-adenosyl-L-methionine = (sulfur carrier)-H + biotin + 2 5'-deoxyadenosine + 2 L-methionine + 2 oxidized [2Fe-2S]-[ferredoxin]. It participates in cofactor biosynthesis; biotin biosynthesis; biotin from 7,8-diaminononanoate: step 2/2. Catalyzes the conversion of dethiobiotin (DTB) to biotin by the insertion of a sulfur atom into dethiobiotin via a radical-based mechanism. This Maricaulis maris (strain MCS10) (Caulobacter maris) protein is Biotin synthase.